A 279-amino-acid chain; its full sequence is HTH-type transcriptional regulator HdfR (279 aa).

One can recognise an HTH lysR-type domain in the interval 1–58 (MDTELLKTFLEVSRTRHFGRAAESLYLTQSAVSFRIRQLENQLGVNLFTRHRNNIRLT). Positions 18–37 (FGRAAESLYLTQSAVSFRIR) form a DNA-binding region, H-T-H motif.

This sequence belongs to the LysR transcriptional regulatory family.

Functionally, negatively regulates the transcription of the flagellar master operon flhDC by binding to the upstream region of the operon. The sequence is that of HTH-type transcriptional regulator HdfR from Escherichia coli O7:K1 (strain IAI39 / ExPEC).